A 201-amino-acid chain; its full sequence is Recombination protein RecR (201 aa).

The segment at 57–72 (CADCRTFTEQEVCNIC) adopts a C4-type zinc-finger fold. The Toprim domain occupies 81–176 (GQICVVESPA…EASRIAHGVP (96 aa)).

It belongs to the RecR family.

Its function is as follows. May play a role in DNA repair. It seems to be involved in an RecBC-independent recombinational process of DNA repair. It may act with RecF and RecO. The protein is Recombination protein RecR of Shigella boydii serotype 18 (strain CDC 3083-94 / BS512).